The following is a 181-amino-acid chain: MCKGLAALPHSCLERAKEIKIKLGILLQKPESAIDLVIPYNEKPEKPAKTQKPSLDEALQWRDSLDKLLQNNYGLASFKSFLKSEFSEENLEFWMACEDYKKIKSPVKMAETAKKIYEEFIQVEAPKEVNIDHFTKEITVKNLVEPSPSSFDVAQKRIHALMEKDSLPRFVRSEFYQEFIK.

The RGS domain occupies 64–180 (SLDKLLQNNY…VRSEFYQEFI (117 aa)).

It localises to the cytoplasm. The protein resides in the membrane. Functionally, inhibits signal transduction by increasing the GTPase activity of G protein alpha subunits thereby driving them into their inactive GDP-bound form. Binds to G(i)-alpha and G(o)-alpha, but not to G(s)-alpha. This Bos taurus (Bovine) protein is Regulator of G-protein signaling 5 (RGS5).